The sequence spans 780 residues: Probable trehalase (780 aa).

A disordered region spans residues 1–48 (MVDFLPKVTEINPPSEGNDGEDNIKPLSSGSEQRPLKEEGQQGGRRHH). Phosphoserine is present on residues Ser-52 and Ser-53. The residue at position 88 (Thr-88) is a Phosphothreonine. Residue Ser-112 is modified to Phosphoserine. Substrate is bound by residues Arg-331, 338–339 (WD), Asn-375, Arg-384, 384–386 (RSQ), and Gly-505. Residues Asp-507 and Glu-703 each act as proton donor/acceptor in the active site.

The protein belongs to the glycosyl hydrolase 37 family.

The enzyme catalyses alpha,alpha-trehalose + H2O = alpha-D-glucose + beta-D-glucose. The polypeptide is Probable trehalase (NTH2) (Saccharomyces cerevisiae (strain ATCC 204508 / S288c) (Baker's yeast)).